We begin with the raw amino-acid sequence, 306 residues long: 3-methyl-2-oxobutanoate hydroxymethyltransferase (306 aa).

Mg(2+) is bound by residues Asp-53 and Asp-96. Residues 53–54, Asp-96, and Lys-126 contribute to the 3-methyl-2-oxobutanoate site; that span reads DS. Glu-128 contributes to the Mg(2+) binding site. The active-site Proton acceptor is Glu-195.

This sequence belongs to the PanB family. Homodecamer; pentamer of dimers. Mg(2+) serves as cofactor.

The protein resides in the cytoplasm. The enzyme catalyses 3-methyl-2-oxobutanoate + (6R)-5,10-methylene-5,6,7,8-tetrahydrofolate + H2O = 2-dehydropantoate + (6S)-5,6,7,8-tetrahydrofolate. The protein operates within cofactor biosynthesis; (R)-pantothenate biosynthesis; (R)-pantoate from 3-methyl-2-oxobutanoate: step 1/2. Functionally, catalyzes the reversible reaction in which hydroxymethyl group from 5,10-methylenetetrahydrofolate is transferred onto alpha-ketoisovalerate to form ketopantoate. This is 3-methyl-2-oxobutanoate hydroxymethyltransferase from Anaeromyxobacter dehalogenans (strain 2CP-1 / ATCC BAA-258).